Reading from the N-terminus, the 207-residue chain is Uridine kinase (207 aa).

Residue 11–18 (GGSGSGKT) coordinates ATP.

It belongs to the uridine kinase family.

It is found in the cytoplasm. The enzyme catalyses uridine + ATP = UMP + ADP + H(+). It catalyses the reaction cytidine + ATP = CMP + ADP + H(+). The protein operates within pyrimidine metabolism; CTP biosynthesis via salvage pathway; CTP from cytidine: step 1/3. It functions in the pathway pyrimidine metabolism; UMP biosynthesis via salvage pathway; UMP from uridine: step 1/1. This is Uridine kinase from Staphylococcus epidermidis (strain ATCC 35984 / DSM 28319 / BCRC 17069 / CCUG 31568 / BM 3577 / RP62A).